The sequence spans 663 residues: UvrABC system protein B (663 aa).

Residues 31–418 (DNIEGGEKAQ…TDTVVEQIIR (388 aa)) enclose the Helicase ATP-binding domain. 44–51 (GATGTGKT) lines the ATP pocket. The Beta-hairpin motif lies at 97-120 (YYDYYQPEAYVPSSDTYIEKDSSV). Positions 435 to 601 (QMDDLLGEIN…TIKKEIRDLI (167 aa)) constitute a Helicase C-terminal domain. Positions 627–662 (QAEIKALQQQMQEAAELLDFELAAQIRDVILELKAI) constitute a UVR domain.

This sequence belongs to the UvrB family. As to quaternary structure, forms a heterotetramer with UvrA during the search for lesions. Interacts with UvrC in an incision complex.

Its subcellular location is the cytoplasm. The UvrABC repair system catalyzes the recognition and processing of DNA lesions. A damage recognition complex composed of 2 UvrA and 2 UvrB subunits scans DNA for abnormalities. Upon binding of the UvrA(2)B(2) complex to a putative damaged site, the DNA wraps around one UvrB monomer. DNA wrap is dependent on ATP binding by UvrB and probably causes local melting of the DNA helix, facilitating insertion of UvrB beta-hairpin between the DNA strands. Then UvrB probes one DNA strand for the presence of a lesion. If a lesion is found the UvrA subunits dissociate and the UvrB-DNA preincision complex is formed. This complex is subsequently bound by UvrC and the second UvrB is released. If no lesion is found, the DNA wraps around the other UvrB subunit that will check the other stand for damage. The sequence is that of UvrABC system protein B from Streptococcus agalactiae serotype III (strain NEM316).